Here is a 210-residue protein sequence, read N- to C-terminus: Putative tyrosine-protein phosphatase OCA1 (210 aa).

Positions 44–204 constitute a Tyrosine-protein phosphatase domain; that stretch reads NFCPVERYLY…EIDREKAPNW (161 aa). The Phosphocysteine intermediate role is filled by cysteine 140.

Belongs to the protein-tyrosine phosphatase family.

Its subcellular location is the cytoplasm. The enzyme catalyses O-phospho-L-tyrosyl-[protein] + H2O = L-tyrosyl-[protein] + phosphate. Functionally, putative tyrosine-protein phosphatase required for protection against superoxide stress. The protein is Putative tyrosine-protein phosphatase OCA1 (OCA1) of Kluyveromyces lactis (strain ATCC 8585 / CBS 2359 / DSM 70799 / NBRC 1267 / NRRL Y-1140 / WM37) (Yeast).